We begin with the raw amino-acid sequence, 783 residues long: Tricorn protease-interacting factor F2 (783 aa).

Substrate contacts are provided by residues glutamate 107 and 236–240; that span reads GAMEN. Histidine 271 is a binding site for Zn(2+). The active-site Proton acceptor is glutamate 272. Zn(2+) contacts are provided by histidine 275 and glutamate 294.

The protein belongs to the peptidase M1 family. In terms of assembly, monomer. Part of the Tricorn proteolytic complex. The cofactor is Zn(2+).

It localises to the cytoplasm. Its function is as follows. Proteases F1, F2 and F3 degrade oligopeptides produced by Tricorn (themselves probably produced by the proteasome), yielding free amino acids. This is Tricorn protease-interacting factor F2 (trf2) from Thermoplasma volcanium (strain ATCC 51530 / DSM 4299 / JCM 9571 / NBRC 15438 / GSS1).